The following is a 198-amino-acid chain: Recombination protein RecR (198 aa).

The C4-type zinc finger occupies 57–72 (CSICGHITDQDPCYIC). Residues 80-175 (SVICVVQDPK…KLSRIAHGLP (96 aa)) enclose the Toprim domain.

This sequence belongs to the RecR family.

Functionally, may play a role in DNA repair. It seems to be involved in an RecBC-independent recombinational process of DNA repair. It may act with RecF and RecO. The polypeptide is Recombination protein RecR (Bacillus velezensis (strain DSM 23117 / BGSC 10A6 / LMG 26770 / FZB42) (Bacillus amyloliquefaciens subsp. plantarum)).